The following is a 361-amino-acid chain: 3-dehydroquinate synthase (361 aa).

NAD(+) is bound by residues 72–77 (SGEKEK), 130–131 (TT), lysine 142, and lysine 151. Residues glutamate 184, histidine 247, and histidine 264 each coordinate Zn(2+).

The protein belongs to the sugar phosphate cyclases superfamily. Dehydroquinate synthase family. Co(2+) is required as a cofactor. Zn(2+) serves as cofactor. The cofactor is NAD(+).

The protein resides in the cytoplasm. The enzyme catalyses 7-phospho-2-dehydro-3-deoxy-D-arabino-heptonate = 3-dehydroquinate + phosphate. Its pathway is metabolic intermediate biosynthesis; chorismate biosynthesis; chorismate from D-erythrose 4-phosphate and phosphoenolpyruvate: step 2/7. In terms of biological role, catalyzes the conversion of 3-deoxy-D-arabino-heptulosonate 7-phosphate (DAHP) to dehydroquinate (DHQ). This is 3-dehydroquinate synthase from Bacillus mycoides (strain KBAB4) (Bacillus weihenstephanensis).